The following is a 392-amino-acid chain: MVTINTALCKNSTRVMILGSGELGKEIAIECQRLGIEVISVDSYSNAPAMHVSHRHHVIDMLNPKEIKRCINLEHPDFIVPEIEAISTNALIELEKNGYNIVPSAKTIHITMNRKLIRVLVSKKLNILTSEYQFASSFDELKIKTKVIGYPCLIKPIMSSSGKGQSVIYNEKELRHSWEKSQTYGRTSLGEVIIEKIIPFDFEITLLVVNSVDGMHFCLPIGHRQEKGDYQESWQPHKMDNVIFEKAKKISKKIVSYLGGYGIFGVEFFIYKDKVIFSEISPRPHDTGMVTLISQNLSEFALHVRSFLKLPIGKIRQYGPSSSVVICGNELYGNKISFSNIECINTNQQIRIFSKPNIKGYRRLGVILDQDETIERSLRKAKKTASKILIKT.

N(1)-(5-phospho-beta-D-ribosyl)glycinamide-binding positions include 22–23 and Glu82; that span reads EL. ATP-binding positions include Arg114, Lys155, 160 to 165, 195 to 198, and Glu203; these read SSGKGQ and EKII. In terms of domain architecture, ATP-grasp spans 119–308; that stretch reads VLVSKKLNIL…EFALHVRSFL (190 aa). 2 residues coordinate Mg(2+): Glu267 and Glu279. N(1)-(5-phospho-beta-D-ribosyl)glycinamide-binding positions include Asp286, Lys355, and 362 to 363; that span reads RR.

This sequence belongs to the PurK/PurT family. As to quaternary structure, homodimer.

It carries out the reaction N(1)-(5-phospho-beta-D-ribosyl)glycinamide + formate + ATP = N(2)-formyl-N(1)-(5-phospho-beta-D-ribosyl)glycinamide + ADP + phosphate + H(+). It functions in the pathway purine metabolism; IMP biosynthesis via de novo pathway; N(2)-formyl-N(1)-(5-phospho-D-ribosyl)glycinamide from N(1)-(5-phospho-D-ribosyl)glycinamide (formate route): step 1/1. In terms of biological role, involved in the de novo purine biosynthesis. Catalyzes the transfer of formate to 5-phospho-ribosyl-glycinamide (GAR), producing 5-phospho-ribosyl-N-formylglycinamide (FGAR). Formate is provided by PurU via hydrolysis of 10-formyl-tetrahydrofolate. This chain is Formate-dependent phosphoribosylglycinamide formyltransferase, found in Wigglesworthia glossinidia brevipalpis.